The following is a 145-amino-acid chain: Ornithine decarboxylase antizyme (145 aa).

Belongs to the ODC antizyme family. As to quaternary structure, interacts with ODC1 and thereby sterically blocks ODC homodimerization.

Its function is as follows. Ornithine decarboxylase (ODC) antizyme protein that negatively regulates ODC activity and intracellular polyamine biosynthesis and uptake in response to increased intracellular polyamine levels. Binds to ODC monomers, inhibiting the assembly of the functional ODC homodimer, and targets the monomers for ubiquitin-independent proteolytic destruction by the 26S proteasome. In Onchocerca volvulus, this protein is Ornithine decarboxylase antizyme.